The following is a 640-amino-acid chain: Probable potassium transport system protein Kup 2 (640 aa).

Positions 1 to 20 (MTADIAATPAETPATNGHGD) are disordered. A run of 12 helical transmembrane segments spans residues 30–50 (LTLG…LYAL), 71–91 (VVSL…VVIL), 117–137 (ASII…DAVI), 155–175 (AAFD…LFAV), 183–203 (VAAF…IAAF), 224–244 (FMLH…LAVT), 265–285 (WLFV…ALVI), 294–314 (PFFL…ATVA), 363–383 (LLLV…ALAS), 385–405 (YGIS…VVIW), 410–430 (WSPI…LTFL), and 437–457 (VLEG…LMYT).

It belongs to the HAK/KUP transporter (TC 2.A.72) family.

The protein localises to the cell inner membrane. The catalysed reaction is K(+)(in) + H(+)(in) = K(+)(out) + H(+)(out). In terms of biological role, transport of potassium into the cell. Likely operates as a K(+):H(+) symporter. The sequence is that of Probable potassium transport system protein Kup 2 from Bradyrhizobium sp. (strain ORS 278).